The sequence spans 641 residues: Choline O-acetyltransferase (641 aa).

A disordered region spans residues 1–29; sequence MPILEKTPPKMAAKSPSSEEEPGLPKLPV. A Phosphoserine modification is found at serine 17. Residue histidine 335 is the Proton acceptor of the active site. Serine 366 carries the post-translational modification Phosphoserine. Residues 413–425, serine 451, and glutamine 552 contribute to the CoA site; that span reads GKTF…CSPD. The segment at 619 to 641 is disordered; the sequence is QSGMGKPLATKEKVTRPSQVHQP.

It belongs to the carnitine/choline acetyltransferase family.

It catalyses the reaction choline + acetyl-CoA = acetylcholine + CoA. Its function is as follows. Catalyzes the reversible synthesis of acetylcholine (ACh) from acetyl CoA and choline at cholinergic synapses. The chain is Choline O-acetyltransferase (CHAT) from Sus scrofa (Pig).